A 210-amino-acid chain; its full sequence is Na(+)-translocating NADH-quinone reductase subunit D (210 aa).

The next 6 membrane-spanning stretches (helical) occupy residues Pro14–Val34, Leu42–Ile62, Ile72–Ala92, Val103–Met123, Phe131–Val151, and Asn178–Ile198.

The protein belongs to the NqrDE/RnfAE family. As to quaternary structure, composed of six subunits; NqrA, NqrB, NqrC, NqrD, NqrE and NqrF.

It localises to the cell inner membrane. The catalysed reaction is a ubiquinone + n Na(+)(in) + NADH + H(+) = a ubiquinol + n Na(+)(out) + NAD(+). Its function is as follows. NQR complex catalyzes the reduction of ubiquinone-1 to ubiquinol by two successive reactions, coupled with the transport of Na(+) ions from the cytoplasm to the periplasm. NqrA to NqrE are probably involved in the second step, the conversion of ubisemiquinone to ubiquinol. This chain is Na(+)-translocating NADH-quinone reductase subunit D, found in Shewanella loihica (strain ATCC BAA-1088 / PV-4).